Here is a 304-residue protein sequence, read N- to C-terminus: E3 ubiquitin-protein ligase RNF144B (304 aa).

The segment at 27 to 245 (PLVTCKLCLC…YDRGPCRNKL (219 aa)) is TRIAD supradomain. Positions 31, 34, 54, 57, 122, 127, 146, 149, 154, 157, 162, 167, 194, and 197 each coordinate Zn(2+). The RING-type 1 zinc-finger motif lies at 31–81 (CKLCLCEQSLDKMTTLQECRCIFCTACLKQYMQLAIREGCGSPITCPDMVC). The segment at 102 to 167 (QLYQRLKFER…KDAWHAEVSC (66 aa)) adopts an IBR-type zinc-finger fold. The RING-type 2; atypical zinc-finger motif lies at 194 to 223 (CPVCRVYIERNEGCAQMMCKNCKHTFCWYC). C207 is a catalytic residue. 6 residues coordinate Zn(2+): C212, C215, C220, C223, H235, and C241. Residues 259–279 (VVGILVGLGIIALVTSPLLLL) traverse the membrane as a helical segment.

Belongs to the RBR family. RNF144 subfamily. Interacts with UBE2L3, UBE2L6 and LCMT2, as well as with BAX. Interacts with TBK1; this interaction inhibits TBK1 phosphorylation and 'Lys-63'-linked polyubiquitination. In terms of processing, auto-ubiquitinated.

It localises to the mitochondrion membrane. Its subcellular location is the cytoplasm. The catalysed reaction is [E2 ubiquitin-conjugating enzyme]-S-ubiquitinyl-L-cysteine + [acceptor protein]-L-lysine = [E2 ubiquitin-conjugating enzyme]-L-cysteine + [acceptor protein]-N(6)-ubiquitinyl-L-lysine.. It functions in the pathway protein modification; protein ubiquitination. E3 ubiquitin-protein ligase which accepts ubiquitin from E2 ubiquitin-conjugating enzymes UBE2L3 and UBE2L6 in the form of a thioester and then directly transfers the ubiquitin to targeted substrates such as LCMT2, thereby promoting their degradation. Induces apoptosis via a p53/TP53-dependent but caspase-independent mechanism. Plays a crucial role in maintaining the genomic stability by controlling the degradation of multiple proteins involved in mitotic progression and DNA damage. Regulates epithelial homeostasis by mediating degradation of CDKN1A and isoform 2 of TP63. Plays a regulatory role in innate immunity by negatively regulating IRF3 activation and IFN-beta production. Mechanistically, inhibits TBK1 phosphorylation and 'Lys-63'-linked polyubiquitination independently of its E3 ligase activity. Alternatively, promotes 'Lys-27' and 'Lys-33'-linked ubiquitination of IFIH1/MDA5, promoting selective autophagic degradation of IFIH1/MDA5 to inhibit antiviral response. This is E3 ubiquitin-protein ligase RNF144B (RNF144B) from Bos taurus (Bovine).